The primary structure comprises 689 residues: Zinc finger protein 185 (689 aa).

Disordered stretches follow at residues M1–K253 and A298–S534. The span at L35–T52 shows a compositional bias: basic and acidic residues. Residue S66 is modified to Phosphoserine. The span at I95–S114 shows a compositional bias: polar residues. A Phosphoserine modification is found at S153. Over residues D157–V166 the composition is skewed to acidic residues. Phosphoserine is present on P206. 2 stretches are compositionally biased toward basic and acidic residues: residues K217–Q232 and N310–F331. Residues A338–N349 are compositionally biased toward polar residues. Low complexity-rich tracts occupy residues S373–V382 and D434–D444. T447 bears the Phosphothreonine mark. Polar residues predominate over residues P448 to E458. A phosphoserine mark is found at S453 and S465. Residues P504–E524 are compositionally biased toward polar residues. The 63-residue stretch at G627–F689 folds into the LIM zinc-binding domain.

In terms of tissue distribution, expressed in placenta, pancreas and kidney. Also expressed in prostate, testis, ovary and blood.

The protein localises to the cytoplasm. The protein resides in the cytoskeleton. It is found in the cell junction. It localises to the focal adhesion. May be involved in the regulation of cellular proliferation and/or differentiation. This Homo sapiens (Human) protein is Zinc finger protein 185 (ZNF185).